Reading from the N-terminus, the 325-residue chain is Elongation factor P--(R)-beta-lysine ligase (325 aa).

Residue 76-78 (SPE) coordinates substrate. Residues 100–102 (RNE) and Asn-109 contribute to the ATP site. Residue Tyr-118 participates in substrate binding. Residue 244 to 245 (EL) coordinates ATP. Residue Glu-251 participates in substrate binding. Gly-300 is an ATP binding site.

This sequence belongs to the class-II aminoacyl-tRNA synthetase family. EpmA subfamily. In terms of assembly, homodimer.

The catalysed reaction is D-beta-lysine + L-lysyl-[protein] + ATP = N(6)-((3R)-3,6-diaminohexanoyl)-L-lysyl-[protein] + AMP + diphosphate + H(+). Its function is as follows. With EpmB is involved in the beta-lysylation step of the post-translational modification of translation elongation factor P (EF-P) on 'Lys-34'. Catalyzes the ATP-dependent activation of (R)-beta-lysine produced by EpmB, forming a lysyl-adenylate, from which the beta-lysyl moiety is then transferred to the epsilon-amino group of EF-P 'Lys-34'. The protein is Elongation factor P--(R)-beta-lysine ligase of Salmonella agona (strain SL483).